Here is a 57-residue protein sequence, read N- to C-terminus: MAITCMDIPKFLFALLLPPVGVFLEKGCTHHLAICILLTILGYIPGIIYACYIILAY.

Helical transmembrane passes span 3–23 (ITCMDIPKFLFALLLPPVGVF) and 36–56 (ILLTILGYIPGIIYACYIILA).

The protein belongs to the UPF0057 (PMP3) family.

The protein resides in the membrane. The chain is UPF0057 membrane protein T23F2.4 from Caenorhabditis elegans.